Consider the following 443-residue polypeptide: Leucine/methionine racemase (443 aa).

Pyridoxal 5'-phosphate-binding positions include 110 to 111 (GS) and Q247. Position 273 is an N6-(pyridoxal phosphate)lysine (K273). T302 contributes to the pyridoxal 5'-phosphate binding site.

The protein belongs to the class-III pyridoxal-phosphate-dependent aminotransferase family. Pyridoxal 5'-phosphate serves as cofactor.

It catalyses the reaction L-leucine = D-leucine. It carries out the reaction L-methionine = D-methionine. Activity is strongly inhibited by several metal ions, including Co(2+), Zn(2+), Ni(2+), Cu(2+) and Fe(3+), and nonsubstrate amino acids such as L-arginine and L-lysine. Activity is completely abolished in the presence of hydroxylamine, an inhibitor of pyridoxal phosphate-dependent enzymes. In terms of biological role, amino acid racemase with moderate substrate specificity. Is primarily active toward leucine, which is the preferred substrate, and methionine. Also exhibits lower levels of activity toward phenylalanine, alanine and serine. The polypeptide is Leucine/methionine racemase (Thermococcus litoralis (strain ATCC 51850 / DSM 5473 / JCM 8560 / NS-C)).